We begin with the raw amino-acid sequence, 542 residues long: 4-coumarate--CoA ligase-like 1 (542 aa).

ATP contacts are provided by Ser-189, Ser-190, Gly-191, Thr-192, Thr-193, and Lys-197. Tyr-237 serves as a coordination point for (E)-4-coumaroyl-AMP. CoA is bound at residue Arg-258. The interval 260-331 (DLRIFLNALI…AKFPNVQVQE (72 aa)) is SBD1. Residues Ala-309, Glu-331, Ala-332, and Thr-336 each coordinate (E)-4-coumaroyl-AMP. ATP contacts are provided by Glu-331, Ala-332, Thr-336, Asp-420, and Arg-435. Positions 332–399 (AYGLTEHSCI…VRSQCVMQGY (68 aa)) are SBD2. The (E)-4-coumaroyl-AMP site is built by Lys-437 and Lys-441. CoA is bound by residues Lys-443 and Gly-444. Lys-526 is a binding site for ATP.

Belongs to the ATP-dependent AMP-binding enzyme family. As to quaternary structure, interacts with TKPR1, PKSA and PKSB. It depends on Mg(2+) as a cofactor. As to expression, mostly confined to anther tapetal cells.

The protein resides in the endoplasmic reticulum. The catalysed reaction is (E)-4-coumarate + ATP + CoA = (E)-4-coumaroyl-CoA + AMP + diphosphate. It catalyses the reaction (E)-4-coumarate + ATP + H(+) = (E)-4-coumaroyl-AMP + diphosphate. The enzyme catalyses (E)-4-coumaroyl-AMP + CoA = (E)-4-coumaroyl-CoA + AMP + H(+). In terms of biological role, carboxylate--CoA ligase that may use 4-coumarate as substrate. Follows a two-step reaction mechanism, wherein the carboxylate substrate first undergoes adenylation by ATP, followed by a thioesterification in the presence of CoA to yield the final CoA thioester. The sequence is that of 4-coumarate--CoA ligase-like 1 from Arabidopsis thaliana (Mouse-ear cress).